The primary structure comprises 273 residues: Formamidopyrimidine-DNA glycosylase (273 aa).

Pro-2 functions as the Schiff-base intermediate with DNA in the catalytic mechanism. Glu-3 serves as the catalytic Proton donor. Lys-58 (proton donor; for beta-elimination activity) is an active-site residue. Residues His-91 and Arg-110 each coordinate DNA. An FPG-type zinc finger spans residues 238–272 (QVYGKTGQPCPRCASMIVKIKLGGRGTHLCPHCQK). The active-site Proton donor; for delta-elimination activity is Arg-262.

It belongs to the FPG family. In terms of assembly, monomer. Requires Zn(2+) as cofactor.

The enzyme catalyses Hydrolysis of DNA containing ring-opened 7-methylguanine residues, releasing 2,6-diamino-4-hydroxy-5-(N-methyl)formamidopyrimidine.. It carries out the reaction 2'-deoxyribonucleotide-(2'-deoxyribose 5'-phosphate)-2'-deoxyribonucleotide-DNA = a 3'-end 2'-deoxyribonucleotide-(2,3-dehydro-2,3-deoxyribose 5'-phosphate)-DNA + a 5'-end 5'-phospho-2'-deoxyribonucleoside-DNA + H(+). In terms of biological role, involved in base excision repair of DNA damaged by oxidation or by mutagenic agents. Acts as a DNA glycosylase that recognizes and removes damaged bases. Has a preference for oxidized purines, such as 7,8-dihydro-8-oxoguanine (8-oxoG). Has AP (apurinic/apyrimidinic) lyase activity and introduces nicks in the DNA strand. Cleaves the DNA backbone by beta-delta elimination to generate a single-strand break at the site of the removed base with both 3'- and 5'-phosphates. In Streptococcus thermophilus (strain ATCC BAA-250 / LMG 18311), this protein is Formamidopyrimidine-DNA glycosylase.